A 260-amino-acid polypeptide reads, in one-letter code: ProSAAS (260 aa).

The N-terminal stretch at 1–33 is a signal peptide; sequence MAGSPLLWGPRAGGVGLLVLLLLGLFRPPPALC. The interval 34–215 is proSAAS(1-180); it reads ARPVKEPRGL…SADSEGVAAP (182 aa). An O-linked (GalNAc...) threonine glycan is attached at Thr53. The segment at 165–188 is disordered; sequence RPRPPVYDDGPAGPDAEEAGDETP. Residues 179 to 188 are compositionally biased toward acidic residues; it reads DAEEAGDETP. The C-terminal inhibitory domain; interacts with PCSK1 stretch occupies residues 221–260; sequence AADHDVGSELPPEGVLGALLRVKRLETPAPQVPARRLLPP. Residue Ser228 is glycosylated (O-linked (GalNAc...) serine). Residues 239–244 carry the Sufficient for inhibition of PCSK1 motif; it reads LLRVKR. O-linked (GalNAc...) threonine glycosylation is present at Thr247.

In terms of assembly, interacts via the C-terminal inhibitory domain with PCSK1 66 kDa form. Post-translationally, proteolytically cleaved in the Golgi. In terms of processing, O-glycosylated with a core 1 or possibly core 8 glycan. In terms of tissue distribution, expressed in brain and pancreas.

Its subcellular location is the secreted. It localises to the golgi apparatus. The protein localises to the trans-Golgi network. Its function is as follows. May function in the control of the neuroendocrine secretory pathway. Proposed be a specific endogenous inhibitor of PCSK1. ProSAAS and Big PEN-LEN, both containing the C-terminal inhibitory domain, but not the further processed peptides reduce PCSK1 activity in the endoplasmic reticulum and Golgi. It reduces the activity of the 84 kDa form but not the autocatalytically derived 66 kDa form of PCSK1. Subsequent processing of proSAAS may eliminate the inhibition. Slows down convertase-mediated processing of proopiomelanocortin and proenkephalin. May control the intracellular timing of PCSK1 rather than its total level of activity. In terms of biological role, endogenous ligand for GPR171. Neuropeptide involved in the regulation of feeding. The polypeptide is ProSAAS (PCSK1N) (Homo sapiens (Human)).